We begin with the raw amino-acid sequence, 554 residues long: MTELEKIGLIPRSIVRMLDRFYYQIYLGTAEPLVKQFRFSKYLLLTSVKSLFVVLFIPFFINIFTKIYVFRPLVEYFWDRKQTEIFLNYELQEKAFSEIRNFEEKMYFDYLIKTENFFPEKPKYFLPEAPLPGELPMQKKELFGVNLQEYKFKSNHSCLKFYSTEANSSVFGFENGNSLKLSHVSLFASKYPIKFTVIKNDLFKIKNQEGKSGAFPASEEEKKLKKGEKALLFPLLPTFSFSPRKNSSFFLGEKENMGISPGSKEEKKLKFFFFPHSGGTFSHCSLGIEDSEGKFSPGRREISPLLPGEHCGKLGKNAIFLLEEEKNGSGETRASFATSGSKAPALEELKNQSIDFLIPLEKSSPQRTFFSQHLASDFCSFDLTAQTKFHFVSFPNSIDTVPYNFNKNTESIFRQKTRELANHYNNESISAITNLLADFMGLFILLFLLVNMKMSLMNTTAFLSESFFSLKDSKKAFLMLLFTDLLVGFHSPRGWEVIFHFLFEHFGLPENHNIIFLLVGTFPVLLDALFKYWIFRHLNRHSPATVATFQAMVE.

A helical transmembrane segment spans residues 50-70 (SLFVVLFIPFFINIFTKIYVF). An insert region spans residues 113-410 (KTENFFPEKP…VPYNFNKNTE (298 aa)). The next 3 helical transmembrane spans lie at 429 to 449 (ISAITNLLADFMGLFILLFLL), 479 to 499 (MLLFTDLLVGFHSPRGWEVIF), and 514 to 534 (IIFLLVGTFPVLLDALFKYWI).

The protein belongs to the CemA family.

It is found in the plastid. The protein localises to the chloroplast inner membrane. The catalysed reaction is K(+)(in) + H(+)(out) = K(+)(out) + H(+)(in). Contributes to K(+)/H(+) antiport activity by supporting proton efflux to control proton extrusion and homeostasis in chloroplasts in a light-dependent manner to modulate photosynthesis. Prevents excessive induction of non-photochemical quenching (NPQ) under continuous-light conditions. Indirectly promotes efficient inorganic carbon uptake into chloroplasts. The polypeptide is Potassium/proton antiporter CemA (Stigeoclonium helveticum (Green alga)).